The sequence spans 73 residues: Ocellatin-PT7 (73 aa).

The first 22 residues, 1–22 (MAFLKKSLFLVLFLGLVSLSIC), serve as a signal peptide directing secretion. A propeptide spanning residues 23 to 39 (DEEKRQDEDDDDDDDEE) is cleaved from the precursor.

In terms of tissue distribution, expressed by the skin glands.

The protein resides in the secreted. Has antibacterial activity against Gram-negative bacteria E.coli ATCC 25922 (MIC=60 uM) and S.choleraesuis ATCC 14028 (MIC=240 uM) and against Gram-positive bacterium S.aureus ATCC 29313 (MIC=240 uM). Shows no hemolytic activity and no cytotoxicity. This Leptodactylus pustulatus (Ceara white-lipped frog) protein is Ocellatin-PT7.